A 126-amino-acid polypeptide reads, in one-letter code: Glycine--tRNA ligase beta subunit (126 aa).

It belongs to the class-II aminoacyl-tRNA synthetase family. Tetramer of two alpha and two beta subunits.

The protein resides in the cytoplasm. It carries out the reaction tRNA(Gly) + glycine + ATP = glycyl-tRNA(Gly) + AMP + diphosphate. This Neisseria gonorrhoeae protein is Glycine--tRNA ligase beta subunit (glyS).